The sequence spans 342 residues: Tetraacyldisaccharide 4'-kinase (342 aa).

Residue 68–75 (TVGGTGKT) coordinates ATP.

The protein belongs to the LpxK family.

It catalyses the reaction a lipid A disaccharide + ATP = a lipid IVA + ADP + H(+). Its pathway is glycolipid biosynthesis; lipid IV(A) biosynthesis; lipid IV(A) from (3R)-3-hydroxytetradecanoyl-[acyl-carrier-protein] and UDP-N-acetyl-alpha-D-glucosamine: step 6/6. In terms of biological role, transfers the gamma-phosphate of ATP to the 4'-position of a tetraacyldisaccharide 1-phosphate intermediate (termed DS-1-P) to form tetraacyldisaccharide 1,4'-bis-phosphate (lipid IVA). The chain is Tetraacyldisaccharide 4'-kinase from Burkholderia cenocepacia (strain ATCC BAA-245 / DSM 16553 / LMG 16656 / NCTC 13227 / J2315 / CF5610) (Burkholderia cepacia (strain J2315)).